The primary structure comprises 753 residues: Protein-lysine N-methyltransferase SMYD4 (753 aa).

112-114 (RSA) contacts S-adenosyl-L-methionine. One can recognise an SET domain in the interval 186–528 (DGVSVYFSSD…AGQEILHCYG (343 aa)). Zn(2+) contacts are provided by C246, C249, C259, C262, C268, C272, H281, and C285. The segment at 246-285 (CHHCLSQSLSFVPCPKCSYARYCGESCQKDAWDQWHQWEC) adopts an MYND-type zinc-finger fold. Residues 467-468 (NH) and Y527 each bind S-adenosyl-L-methionine.

This sequence belongs to the class V-like SAM-binding methyltransferase superfamily.

It localises to the nucleus. It is found in the cytoplasm. It catalyses the reaction L-lysyl-[protein] + S-adenosyl-L-methionine = N(6)-methyl-L-lysyl-[protein] + S-adenosyl-L-homocysteine + H(+). Protein-lysine N-methyltransferase. Monomethylates PRMT5, modulating its transcriptional activity. May also act as a histone methyltransferase. Plays a critical role in cardiac development. Acts as a key epigenetic regulator of gene expression during cardiac development via its dual activities as a methyltransferase and negative regulator of HDAC1. The sequence is that of Protein-lysine N-methyltransferase SMYD4 (smyd4) from Danio rerio (Zebrafish).